A 325-amino-acid polypeptide reads, in one-letter code: Chain length determinant protein (325 aa).

Residues M1 to K31 are Cytoplasmic-facing. Residues M32–A52 traverse the membrane as a helical segment. Over K53 to K294 the chain is Periplasmic. The chain crosses the membrane as a helical span at residues A295–G315. Topologically, residues R316 to K325 are cytoplasmic.

This sequence belongs to the WzzB/Cld/Rol family.

The protein localises to the cell inner membrane. The protein operates within bacterial outer membrane biogenesis; lipopolysaccharide biosynthesis. Functionally, confers a modal distribution of chain length on the O-antigen component of lipopolysaccharide (LPS). Gives rise to a reduced number of short chain molecules and increases in numbers of longer molecules, with a modal value of 13 (in strain O111/M92) and of 17 (in strain K12). The protein is Chain length determinant protein (wzzB) of Escherichia coli.